The chain runs to 386 residues: Putative prophage major tail sheath protein (386 aa).

The protein belongs to the myoviridae tail sheath protein family.

The protein resides in the secreted. This Pseudomonas aeruginosa (strain UCBPP-PA14) protein is Putative prophage major tail sheath protein.